We begin with the raw amino-acid sequence, 6885 residues long: Nesprin-2 (6885 aa).

The tract at residues 1-286 (MASSPELPTE…YVAQFLQYSK (286 aa)) is actin-binding. The Cytoplasmic segment spans residues 1-6834 (MASSPELPTE…QRSFLSRVVR (6834 aa)). Calponin-homology (CH) domains follow at residues 31–136 (DTQK…LHFH) and 181–286 (MSAR…QYSK). Spectrin repeat units follow at residues 297–378 (GKVK…HQIN), 379–472 (AWKI…RINN), 473–575 (ILEK…KNIY), 576–680 (NVKS…KQDQ), 735–838 (VAKD…KNLT), 839–932 (DVSP…LHHE), and 933–1034 (LSLY…KCAS). Positions 297-6782 (GKVKDAMGWL…PASPLPSFDE (6486 aa)) form a coiled coil. Ser-841 carries the post-translational modification Phosphoserine. Lys-955 carries the post-translational modification N6-acetyllysine. Over residues 1042 to 1059 (PTAGGTSKNEGTITTSEN) the composition is skewed to polar residues. Residues 1042 to 1084 (PTAGGTSKNEGTITTSENRGGDPHSEAPFAKSDNQPSTEKAME) form a disordered region. Spectrin repeat units lie at residues 1121–1212 (TYRD…TLNT), 1263–1323 (NIQD…DTLK), 1324–1419 (ALED…YGVQ), 1420–1524 (EEFT…ALVT), 1525–1636 (ECLE…KTED), 1637–1738 (YYEN…TGES), 1739–1830 (NCHA…TKKS), 1831–1938 (VLQD…AKEL), 1939–2036 (EDSL…EEED), 2037–2132 (KLLP…LAST), 2133–2243 (YLSH…SVQN), and 2244–2360 (LDGH…LNSI). Positions 2368–2382 (EKKGKFTLPGREKQA) are enriched in basic and acidic residues. The disordered stretch occupies residues 2368–2394 (EKKGKFTLPGREKQATSDVQESTQESA). The segment covering 2383 to 2393 (TSDVQESTQES) has biased composition (polar residues). Spectrin repeat units lie at residues 2432-2513 (DERK…TLKK), 2514-2620 (NKES…KYSQ), 2621-2717 (QVVE…ETLE), 2718-2831 (PLHL…QLEF), 2832-2933 (KLEE…FIQN), 2934-3036 (TCNE…EKIK), 3037-3142 (QLDT…NMVL), 3143-3248 (ELSP…DLRT), 3249-3352 (NVLN…AQET), 3353-3465 (EAER…MWCE), 3466-3573 (ELKQ…KVQK), 3574-3679 (NKEL…SNEV), 3680-3777 (LKSS…ECRT), 3778-3880 (SQLN…KIME), 3881-3986 (SLPQ…VTQE), and 3987-4086 (QNEL…LPAV). A Phosphoserine modification is found at Ser-2781. 2 stretches are compositionally biased toward basic and acidic residues: residues 4073–4083 (QEQEGVERDRL) and 4093–4102 (VAERDASERK). Disordered stretches follow at residues 4073–4162 (QEQE…SGTI), 4184–4232 (DSLN…KTRP), 4335–4363 (EKHS…PVNL), and 4416–4448 (HDND…QGQN). Ser-4108 carries the phosphoserine modification. Composition is skewed to basic and acidic residues over residues 4122-4134 (SSVK…EKAE) and 4144-4155 (WKHDKDMEEDRA). Residues 4229–4348 (KTRPEPTEVL…EDQHPTILKK (120 aa)) form a Spectrin 36 repeat. Residues 4335–4356 (EKHSEDQHPTILKKSSEPEHQE) show a composition bias toward basic and acidic residues. The span at 4421–4434 (TQESSASNQASSPE) shows a compositional bias: polar residues. Spectrin repeat units lie at residues 4520–4639 (NMTE…RSYQ), 4640–4727 (NEIK…RARY), 4728–4837 (TELS…QSLL), 4838–4943 (QKWE…QALL), 4944–5051 (KHLL…QEKL), 5052–5164 (HQLQ…KIQH), 5165–5266 (LEQL…TQVN), 5267–5391 (QLKT…KAYS), 5392–5487 (NAHG…MLLV), 5488–5589 (KANE…CSEL), 5590–5704 (QGIG…QWQD), 5705–5799 (FTTS…PQLA), 5800–5907 (EMIK…RVAI), 5908–6017 (RKQE…VKKL), 6018–6135 (KETF…EETW), 6136–6243 (RLWQ…LRHF), and 6244–6355 (TNQR…PGLE). Phosphoserine is present on Ser-5785. The span at 6354–6367 (LEDEKEASENETDM) shows a compositional bias: acidic residues. The tract at residues 6354–6508 (LEDEKEASEN…GTDGGKEGPR (155 aa)) is disordered. Ser-6361, Ser-6384, Ser-6411, Ser-6428, Ser-6429, Ser-6430, and Ser-6459 each carry phosphoserine. Residues 6368 to 6384 (EDPREIQTDSWRKRGES) are compositionally biased toward basic and acidic residues. Spectrin repeat units lie at residues 6461–6549 (SCPE…KLKI), 6550–6665 (KQNL…QCQD), and 6666–6782 (FHQL…SFDE). Residues 6463–6474 (PEHHYKQMEGDR) show a composition bias toward basic and acidic residues. Residues 6477-6489 (PPVPPASSTPYKP) are compositionally biased toward pro residues. Residues 6490–6499 (PYGKLLLPPG) show a composition bias toward low complexity. Positions 6769-6824 (GTQNPASPLPSFDEVDSGDQPPATSVPAPRAKQFRAVRTTEGEEETESRVPGSTRP) are disordered. The 60-residue stretch at 6826–6885 (RSFLSRVVRAALPLQLLLLLLLLLACLLPSSEEDYSCTQANNFARSFYPMLRYTNGPPPT) folds into the KASH domain. The chain crosses the membrane as a helical; Anchor for type IV membrane protein span at residues 6835–6855 (AALPLQLLLLLLLLLACLLPS). The Perinuclear space portion of the chain corresponds to 6856-6885 (SEEDYSCTQANNFARSFYPMLRYTNGPPPT). Positions 6872–6885 (FYPMLRYTNGPPPT) are sufficient for interaction with SUN2.

Belongs to the nesprin family. Core component of LINC complexes which are composed of inner nuclear membrane SUN domain-containing proteins coupled to outer nuclear membrane KASH domain-containing nesprins. SUN and KASH domain-containing proteins seem to bind each other promiscuously; however, some LINC complex constituents are tissue- or cell type-specific. At least SUN1/2-containing core LINC complexes are proposed to be hexameric composed of three protomers of each KASH and SUN domain-containing protein. The SUN2:SYNE2/KASH2 complex is a heterohexamer; the homotrimeric cloverleave-like conformation of the SUN domain is a prerequisite for LINC complex formation in which three separate SYNE2/KASH2 peptides bind at the interface of adjacent SUN domains. Interacts with EMD, LMNA, MKS3 and F-actin via its N-terminal domain. Interacts with DCTN1 and DYNC1I1/2; suggesting the association with the dynein-dynactin motor complex. Associates with kinesin motor complexes. Interacts with TMEM67. Interacts (via KASH domain) with TMEM258. Interacts with BROX; this interaction promotes SYN2 ubiquitination and facilitates the relaxation of mechanical stress imposed by compressive actin fibers at the rupture site. The disulfid bond with SUN2 is required for stability of the SUN2:SYNE2/KASH2 LINC complex under tensile forces though not required for the interaction. Post-translationally, ubiquitinated, targeting it for degradation. In terms of tissue distribution, widely expressed, with higher level in kidney, adult and fetal liver, stomach and placenta. Weakly expressed in skeletal muscle and brain. Isoform 5 is highly expressed in pancreas, skeletal muscle and heart.

The protein localises to the nucleus outer membrane. Its subcellular location is the sarcoplasmic reticulum membrane. The protein resides in the cell membrane. It localises to the cytoplasm. It is found in the cytoskeleton. The protein localises to the mitochondrion. Its subcellular location is the nucleus. The protein resides in the nucleoplasm. It localises to the myofibril. It is found in the sarcomere. The protein localises to the z line. Its subcellular location is the cell junction. The protein resides in the focal adhesion. In terms of biological role, multi-isomeric modular protein which forms a linking network between organelles and the actin cytoskeleton to maintain the subcellular spatial organization. As a component of the LINC (LInker of Nucleoskeleton and Cytoskeleton) complex involved in the connection between the nuclear lamina and the cytoskeleton. The nucleocytoplasmic interactions established by the LINC complex play an important role in the transmission of mechanical forces across the nuclear envelope and in nuclear movement and positioning. Specifically, SYNE2 and SUN2 assemble in arrays of transmembrane actin-associated nuclear (TAN) lines which are bound to F-actin cables and couple the nucleus to retrograde actin flow during actin-dependent nuclear movement. May be involved in nucleus-centrosome attachment. During interkinetic nuclear migration (INM) at G2 phase and nuclear migration in neural progenitors its LINC complex association with SUN1/2 and probable association with cytoplasmic dynein-dynactin motor complexes functions to pull the nucleus toward the centrosome; SYNE1 and SYNE2 may act redundantly. During INM at G1 phase mediates respective LINC complex association with kinesin to push the nucleus away from the centrosome. Involved in nuclear migration in retinal photoreceptor progenitors. Required for centrosome migration to the apical cell surface during early ciliogenesis. Facilitates the relaxation of mechanical stress imposed by compressive actin fibers at the rupture site through its nteraction with SYN2. The polypeptide is Nesprin-2 (Homo sapiens (Human)).